Consider the following 568-residue polypeptide: Matrix metalloproteinase-21 (568 aa).

An N-terminal signal peptide occupies residues 1–24 (MLAASVLRLTLPLCWLVAPQPTQP). A propeptide spanning residues 25 to 143 (ERLFHSRDRS…SLGLRPRARQ (119 aa)) is cleaved from the precursor. The Cysteine switch motif lies at 110 to 117 (PRCGVPDT). Zn(2+) contacts are provided by Cys112 and His282. The active site involves Glu283. Residues His286 and His292 each contribute to the Zn(2+) site. The cysteines at positions 328 and 559 are disulfide-linked. 4 Hemopexin repeats span residues 329–388 (KGSF…WRGI), 390–446 (TQSI…FPGI), 447–495 (PSPL…FPAI), and 502–558 (FRNL…WFDV). An N-linked (GlcNAc...) asparagine glycan is attached at Asn371.

Belongs to the peptidase M10A family. Zn(2+) serves as cofactor. Requires Ca(2+) as cofactor. Post-translationally, the precursor is cleaved by a furin endopeptidase.

It is found in the secreted. Plays a specialized role in the generation of left-right asymmetry during embryogenesis. May act as a negative regulator of the NOTCH-signaling pathway. Cleaves alpha-1-antitrypsin. This Mus musculus (Mouse) protein is Matrix metalloproteinase-21 (Mmp21).